Here is a 205-residue protein sequence, read N- to C-terminus: ATP-dependent Clp protease proteolytic subunit (205 aa).

Serine 109 acts as the Nucleophile in catalysis. Histidine 134 is a catalytic residue.

It belongs to the peptidase S14 family. In terms of assembly, fourteen ClpP subunits assemble into 2 heptameric rings which stack back to back to give a disk-like structure with a central cavity, resembling the structure of eukaryotic proteasomes.

The protein resides in the cytoplasm. It carries out the reaction Hydrolysis of proteins to small peptides in the presence of ATP and magnesium. alpha-casein is the usual test substrate. In the absence of ATP, only oligopeptides shorter than five residues are hydrolyzed (such as succinyl-Leu-Tyr-|-NHMec, and Leu-Tyr-Leu-|-Tyr-Trp, in which cleavage of the -Tyr-|-Leu- and -Tyr-|-Trp bonds also occurs).. In terms of biological role, cleaves peptides in various proteins in a process that requires ATP hydrolysis. Has a chymotrypsin-like activity. Plays a major role in the degradation of misfolded proteins. This is ATP-dependent Clp protease proteolytic subunit from Buchnera aphidicola subsp. Baizongia pistaciae (strain Bp).